The primary structure comprises 153 residues: Movement protein (153 aa).

Residues 107–153 (SSSARPLPQQPAPSLTSWTPIAKHLHSHQQSISSQSPKLVRGASQRR) form a disordered region.

The protein belongs to the luteoviruses movement protein family.

Transports viral genome to neighboring plant cells directly through plasmosdesmata, without any budding. The movement protein allows efficient cell to cell propagation, by bypassing the host cell wall barrier. This Avena byzantina (Oat) protein is Movement protein.